The chain runs to 293 residues: Methoxy mycolic acid synthase MmaA3 (293 aa).

S-adenosyl-L-methionine-binding positions include 39-40 (YS), 78-80 (GCG), 100-105 (TLSKNQ), 129-130 (WA), and Ile142. Cys275 is an active-site residue.

This sequence belongs to the CFA/CMAS family.

Its pathway is lipid metabolism; mycolic acid biosynthesis. Its function is as follows. Involved in the biosynthesis of methoxymycolic acid. It catalyzes the O-methylation of the hydroxy group of the hydroxymycolate to form a methyl ether. In Mycobacterium bovis (strain ATCC BAA-935 / AF2122/97), this protein is Methoxy mycolic acid synthase MmaA3 (cmaB).